Here is a 356-residue protein sequence, read N- to C-terminus: Probable arabinogalactan endo-beta-1,4-galactanase A (356 aa).

The N-terminal stretch at 1 to 21 (MLGKTVLLPLLVLLCHSLASA) is a signal peptide. The N-linked (GlcNAc...) asparagine glycan is linked to Asn-133. The active-site Proton donor is Glu-157. Glu-268 (nucleophile) is an active-site residue.

Belongs to the glycosyl hydrolase 53 family.

The protein localises to the secreted. The catalysed reaction is The enzyme specifically hydrolyzes (1-&gt;4)-beta-D-galactosidic linkages in type I arabinogalactans.. Functionally, endogalactanase involved in the degradation of plant cell wall polysaccharides, and more particularly of hairy regions of pectin. In Aspergillus fumigatus (strain CBS 144.89 / FGSC A1163 / CEA10) (Neosartorya fumigata), this protein is Probable arabinogalactan endo-beta-1,4-galactanase A (galA).